A 311-amino-acid polypeptide reads, in one-letter code: MPKVRTKDIIEKFQLELVSGAEGIHRPITTSDLSRPGIEMAGYFTYYPAERIQLLGKTELSFYETLSLEEKKMRMERLCTDITPGIIISRGLEVPPELIEASERQSVPVMRSTMKTTRLSSRLTNYLESKLAPTTAVHGVLVDVYGVGVLITGKSGVGKSETALELVKRGHRLVADDCVEIRQEDEGVLVGSAPELIEHLLEIRGLGIINMMTLFGAGAVRTHKRISLVIDLELWDPNKQYDRLGLEEEKVKILDTELTKLTIPVRPGRNLAVIVEVAAMNFRLKRMGVNAAEEFSARLTDAIEDGEHDYE.

Residues His-138 and Lys-159 contribute to the active site. 153–160 (GKSGVGKS) lines the ATP pocket. Mg(2+) is bound at residue Ser-160. The Proton acceptor; for phosphorylation activity. Proton donor; for dephosphorylation activity role is filled by Asp-177. The tract at residues 201-210 (LEIRGLGIIN) is important for the catalytic mechanism of both phosphorylation and dephosphorylation. Glu-202 contributes to the Mg(2+) binding site. Arg-243 is an active-site residue. The important for the catalytic mechanism of dephosphorylation stretch occupies residues 264 to 269 (PVRPGR).

Belongs to the HPrK/P family. In terms of assembly, homohexamer. Mg(2+) is required as a cofactor.

The enzyme catalyses [HPr protein]-L-serine + ATP = [HPr protein]-O-phospho-L-serine + ADP + H(+). It catalyses the reaction [HPr protein]-O-phospho-L-serine + phosphate + H(+) = [HPr protein]-L-serine + diphosphate. Catalyzes the ATP- as well as the pyrophosphate-dependent phosphorylation of a specific serine residue in HPr, a phosphocarrier protein of the phosphoenolpyruvate-dependent sugar phosphotransferase system (PTS). HprK/P also catalyzes the pyrophosphate-producing, inorganic phosphate-dependent dephosphorylation (phosphorolysis) of seryl-phosphorylated HPr (P-Ser-HPr). The two antagonistic activities of HprK/P are regulated by several intracellular metabolites, which change their concentration in response to the absence or presence of rapidly metabolisable carbon sources (glucose, fructose, etc.) in the growth medium. Also phosphorylates/dephosphorylates the HPr-like catabolite repression protein crh on a specific serine residue. Therefore, by controlling the phosphorylation state of HPr and crh, HPrK/P is a sensor enzyme that plays a major role in the regulation of carbon metabolism and sugar transport: it mediates carbon catabolite repression (CCR), and regulates PTS-catalyzed carbohydrate uptake and inducer exclusion. In Geobacillus sp. (strain WCH70), this protein is HPr kinase/phosphorylase.